The chain runs to 279 residues: Elongation factor Ts (279 aa).

Positions Thr-79–Val-82 are involved in Mg(2+) ion dislocation from EF-Tu.

It belongs to the EF-Ts family.

It is found in the cytoplasm. In terms of biological role, associates with the EF-Tu.GDP complex and induces the exchange of GDP to GTP. It remains bound to the aminoacyl-tRNA.EF-Tu.GTP complex up to the GTP hydrolysis stage on the ribosome. The sequence is that of Elongation factor Ts from Phytoplasma mali (strain AT).